We begin with the raw amino-acid sequence, 124 residues long: Glutaredoxin-2 (124 aa).

Residues Cys13 and Cys16 are joined by a disulfide bond.

The protein belongs to the glutaredoxin family. Homodimer.

Its subcellular location is the host cytoplasm. Glutaredoxin necessary for virion morphogenesis and virus replication. Functions as a thiol-disulfide transfer protein between membrane-associated OPG128 and substrates OPG095 or OPG053. The complete pathway for formation of disulfide bonds in intracellular virion membrane proteins sequentially involves oxidation of OPG072, OPG128 and OPG088. Exhibit thioltransferase and dehydroascorbate reductase activities in vitro. This is Glutaredoxin-2 (OPG088) from Homo sapiens (Human).